The primary structure comprises 359 residues: 3-dehydroquinate synthase (359 aa).

NAD(+)-binding positions include 71 to 76, 105 to 109, 129 to 130, K142, and K151; these read DGEAYK, GVVGD, and TT. Zn(2+) contacts are provided by E184, H247, and H264.

This sequence belongs to the sugar phosphate cyclases superfamily. Dehydroquinate synthase family. Co(2+) is required as a cofactor. Zn(2+) serves as cofactor. It depends on NAD(+) as a cofactor.

The protein localises to the cytoplasm. It catalyses the reaction 7-phospho-2-dehydro-3-deoxy-D-arabino-heptonate = 3-dehydroquinate + phosphate. It functions in the pathway metabolic intermediate biosynthesis; chorismate biosynthesis; chorismate from D-erythrose 4-phosphate and phosphoenolpyruvate: step 2/7. Catalyzes the conversion of 3-deoxy-D-arabino-heptulosonate 7-phosphate (DAHP) to dehydroquinate (DHQ). This Burkholderia cenocepacia (strain HI2424) protein is 3-dehydroquinate synthase.